Consider the following 317-residue polypeptide: DNA-directed RNA polymerase subunit alpha 2 (317 aa).

The alpha N-terminal domain (alpha-NTD) stretch occupies residues 1-227; that stretch reads MALENLLHPT…NQLRNIVDIE (227 aa). An alpha C-terminal domain (alpha-CTD) region spans residues 241-317; sequence INPILLKHVE…TLIENWPQDL (77 aa).

The protein belongs to the RNA polymerase alpha chain family. In terms of assembly, homodimer. The RNAP catalytic core consists of 2 alpha, 1 beta, 1 beta' and 1 omega subunit. When a sigma factor is associated with the core the holoenzyme is formed, which can initiate transcription.

It carries out the reaction RNA(n) + a ribonucleoside 5'-triphosphate = RNA(n+1) + diphosphate. Functionally, DNA-dependent RNA polymerase catalyzes the transcription of DNA into RNA using the four ribonucleoside triphosphates as substrates. In Francisella tularensis subsp. holarctica (strain FTNF002-00 / FTA), this protein is DNA-directed RNA polymerase subunit alpha 2.